The following is a 252-amino-acid chain: Ubiquinone biosynthesis O-methyltransferase (252 aa).

4 residues coordinate S-adenosyl-L-methionine: arginine 41, glycine 72, aspartate 93, and methionine 136.

This sequence belongs to the methyltransferase superfamily. UbiG/COQ3 family.

The catalysed reaction is a 3-demethylubiquinol + S-adenosyl-L-methionine = a ubiquinol + S-adenosyl-L-homocysteine + H(+). The enzyme catalyses a 3-(all-trans-polyprenyl)benzene-1,2-diol + S-adenosyl-L-methionine = a 2-methoxy-6-(all-trans-polyprenyl)phenol + S-adenosyl-L-homocysteine + H(+). Its pathway is cofactor biosynthesis; ubiquinone biosynthesis. Functionally, O-methyltransferase that catalyzes the 2 O-methylation steps in the ubiquinone biosynthetic pathway. The sequence is that of Ubiquinone biosynthesis O-methyltransferase from Rhizobium leguminosarum bv. trifolii (strain WSM2304).